Reading from the N-terminus, the 579-residue chain is Lens epithelium-derived growth factor (579 aa).

In terms of domain architecture, PWWP spans 1–64; it reads MSRDFKPGDL…PKDIFPYSEN (64 aa). Disordered regions lie at residues 62 to 81, 88 to 203, 215 to 397, and 492 to 579; these read SENK…NEGL, PKVK…EEAA, AAPV…SMDS, and AEQK…FENK. Residues 94 to 107 show a composition bias toward polar residues; sequence HQPSHPAVNTSIKE. Residues 153-173 show a composition bias toward basic and acidic residues; sequence KEMHSTKEDEEPSEKNSKEGV. The segment covering 184 to 193 has biased composition (basic residues); the sequence is VARRGRKRKA. The Nuclear localization signal signature appears at 186–196; the sequence is RRGRKRKAEKQ. Positions 215 to 224 are enriched in low complexity; it reads AAPVTVSPKV. Residues 261-308 show a composition bias toward basic and acidic residues; sequence EEEKAKKKGPDEKPKKQGKKDEEGQKEEEKPKKEYDKKDGKKEAEPKR. Acidic residues predominate over residues 321-330; sequence DSEDEGGEEE. The segment covering 334 to 349 has biased composition (basic residues); sequence KKKGGRSFQSTHRRNI. The stretch at 347-442 forms a coiled coil; that stretch reads RNIMRGQHEK…SMQQAQKHTE (96 aa). Basic and acidic residues-rich tracts occupy residues 352-397 and 492-522; these read GQHE…SMDS and AEQK…KDQT. Residues 387–464 form an integrase-binding domain (IBD) region; that stretch reads MEKKRETSMD…VSQVIMEKST (78 aa). Residues 530 to 543 show a composition bias toward polar residues; sequence GSETQDTNQSQHNG. Residues 544-579 are compositionally biased toward basic and acidic residues; it reads ENAEEKDKLEVASKKKTCGEESELEKPAKESAFENK.

It belongs to the HDGF family.

Its subcellular location is the nucleus. Functionally, transcriptional coactivator involved in neuroepithelial stem cell differentiation and neurogenesis. Involved in particular in lens epithelial cell gene regulation and stress responses. May play an important role in lens epithelial to fiber cell terminal differentiation. May play a protective role during stress-induced apoptosis. In Gallus gallus (Chicken), this protein is Lens epithelium-derived growth factor (PSIP1).